We begin with the raw amino-acid sequence, 518 residues long: Bifunctional purine biosynthesis protein PurH (518 aa).

Positions 1–146 (MGRMALLSTS…KNHAHVTVLV (146 aa)) constitute an MGS-like domain.

It belongs to the PurH family.

It catalyses the reaction (6R)-10-formyltetrahydrofolate + 5-amino-1-(5-phospho-beta-D-ribosyl)imidazole-4-carboxamide = 5-formamido-1-(5-phospho-D-ribosyl)imidazole-4-carboxamide + (6S)-5,6,7,8-tetrahydrofolate. The enzyme catalyses IMP + H2O = 5-formamido-1-(5-phospho-D-ribosyl)imidazole-4-carboxamide. Its pathway is purine metabolism; IMP biosynthesis via de novo pathway; 5-formamido-1-(5-phospho-D-ribosyl)imidazole-4-carboxamide from 5-amino-1-(5-phospho-D-ribosyl)imidazole-4-carboxamide (10-formyl THF route): step 1/1. It participates in purine metabolism; IMP biosynthesis via de novo pathway; IMP from 5-formamido-1-(5-phospho-D-ribosyl)imidazole-4-carboxamide: step 1/1. This Thermosynechococcus vestitus (strain NIES-2133 / IAM M-273 / BP-1) protein is Bifunctional purine biosynthesis protein PurH.